An 80-amino-acid chain; its full sequence is Large ribosomal subunit protein bL31B (80 aa).

Belongs to the bacterial ribosomal protein bL31 family. Type B subfamily. As to quaternary structure, part of the 50S ribosomal subunit.

This chain is Large ribosomal subunit protein bL31B, found in Shouchella clausii (strain KSM-K16) (Alkalihalobacillus clausii).